The chain runs to 140 residues: Nucleoside diphosphate kinase (140 aa).

Residues Lys-11, Phe-59, Arg-87, Thr-93, Arg-104, and Asn-114 each contribute to the ATP site. His-117 (pros-phosphohistidine intermediate) is an active-site residue.

This sequence belongs to the NDK family. As to quaternary structure, homotetramer. Mg(2+) serves as cofactor.

The protein resides in the cytoplasm. The enzyme catalyses a 2'-deoxyribonucleoside 5'-diphosphate + ATP = a 2'-deoxyribonucleoside 5'-triphosphate + ADP. The catalysed reaction is a ribonucleoside 5'-diphosphate + ATP = a ribonucleoside 5'-triphosphate + ADP. Major role in the synthesis of nucleoside triphosphates other than ATP. The ATP gamma phosphate is transferred to the NDP beta phosphate via a ping-pong mechanism, using a phosphorylated active-site intermediate. In Rhizobium rhizogenes (strain K84 / ATCC BAA-868) (Agrobacterium radiobacter), this protein is Nucleoside diphosphate kinase.